A 312-amino-acid chain; its full sequence is Zinc transporter ZitB (312 aa).

5 helical membrane passes run 21 to 41 (LLFA…GGIL), 48 to 68 (LADA…LLVV), 90 to 110 (AAFV…WEAI), 123 to 143 (LMMV…WILH), and 164 to 184 (LLGS…GWTP).

It belongs to the cation diffusion facilitator (CDF) transporter (TC 2.A.4) family. SLC30A subfamily.

The protein localises to the cell inner membrane. Its function is as follows. Involved in zinc efflux across the cytoplasmic membrane, thus reducing zinc accumulation in the cytoplasm and rendering bacteria more resistant to zinc. It may contribute to zinc homeostasis at low concentrations of zinc. The chain is Zinc transporter ZitB from Salmonella typhi.